Reading from the N-terminus, the 343-residue chain is Sodium/bile acid cotransporter 7-A (343 aa).

Residues Met1 to Glu10 are Cytoplasmic-facing. The chain crosses the membrane as a helical span at residues Trp11 to Val31. The Extracellular segment spans residues Lys32 to Lys37. A helical transmembrane segment spans residues Pro38–Leu58. The Cytoplasmic portion of the chain corresponds to Lys59–Lys71. The chain crosses the membrane as a helical span at residues Leu72–Leu92. Over Gln93–Pro116 the chain is Extracellular. A helical transmembrane segment spans residues Pro117 to Phe137. Position 138 (Asn138) is a topological domain, cytoplasmic. Residues Ser139 to Gly159 traverse the membrane as a helical segment. The Extracellular segment spans residues Ser160–Ser163. Residues Val164–Gly184 form a helical membrane-spanning segment. The Cytoplasmic portion of the chain corresponds to Gln185–Pro201. A helical membrane pass occupies residues Phe202–Phe222. The Extracellular portion of the chain corresponds to Ser223–Leu234. Residues Val235 to Phe255 form a helical membrane-spanning segment. Residues Ser256 to Ala270 are Cytoplasmic-facing. The helical transmembrane segment at Ile271–Phe291 threads the bilayer. Topologically, residues Val292–Ser298 are extracellular. The chain crosses the membrane as a helical span at residues Leu299–Val319. Residues Pro320–Leu343 are Cytoplasmic-facing.

The protein belongs to the bile acid:sodium symporter (BASS) (TC 2.A.28) family. As to expression, strongly expressed in small intestine. Moderately expressed in spleen. Weakly expressed in skeletal muscle. Not detected in other tissues tested.

It localises to the cell membrane. Its subcellular location is the endoplasmic reticulum membrane. It is found in the golgi apparatus membrane. Its function is as follows. Involved in teeth and skeletal development. Has an essential role in the biosynthesis and trafficking of glycosaminoglycans and glycoproteins to produce a proper functioning extracellular matrix. Required for extracellular matrix mineralization. Also involved in the regulation of cellular calcium homeostasis. Does not show transport activity towards bile acids or steroid sulfates. The chain is Sodium/bile acid cotransporter 7-A (slc10a7-a) from Xenopus laevis (African clawed frog).